The chain runs to 622 residues: 1-deoxy-D-xylulose-5-phosphate synthase (622 aa).

Thiamine diphosphate contacts are provided by residues histidine 80 and 121–123 (GHS). Aspartate 152 contributes to the Mg(2+) binding site. Thiamine diphosphate contacts are provided by residues 153 to 154 (GA), asparagine 181, tyrosine 288, and glutamate 370. Mg(2+) is bound at residue asparagine 181.

The protein belongs to the transketolase family. DXPS subfamily. As to quaternary structure, homodimer. The cofactor is Mg(2+). Thiamine diphosphate serves as cofactor.

It catalyses the reaction D-glyceraldehyde 3-phosphate + pyruvate + H(+) = 1-deoxy-D-xylulose 5-phosphate + CO2. The protein operates within metabolic intermediate biosynthesis; 1-deoxy-D-xylulose 5-phosphate biosynthesis; 1-deoxy-D-xylulose 5-phosphate from D-glyceraldehyde 3-phosphate and pyruvate: step 1/1. In terms of biological role, catalyzes the acyloin condensation reaction between C atoms 2 and 3 of pyruvate and glyceraldehyde 3-phosphate to yield 1-deoxy-D-xylulose-5-phosphate (DXP). In Shewanella sp. (strain MR-4), this protein is 1-deoxy-D-xylulose-5-phosphate synthase.